A 104-amino-acid polypeptide reads, in one-letter code: ATP synthase subunit c (104 aa).

A run of 2 helical transmembrane segments spans residues 31 to 51 (SMIAAGLGLGLAALGGAIGMG) and 75 to 95 (MFIALAMIEAQVIYALVIALI).

This sequence belongs to the ATPase C chain family. F-type ATPases have 2 components, F(1) - the catalytic core - and F(0) - the membrane proton channel. F(1) has five subunits: alpha(3), beta(3), gamma(1), delta(1), epsilon(1). F(0) has three main subunits: a(1), b(2) and c(10-14). The alpha and beta chains form an alternating ring which encloses part of the gamma chain. F(1) is attached to F(0) by a central stalk formed by the gamma and epsilon chains, while a peripheral stalk is formed by the delta and b chains.

It localises to the cell inner membrane. In terms of biological role, f(1)F(0) ATP synthase produces ATP from ADP in the presence of a proton or sodium gradient. F-type ATPases consist of two structural domains, F(1) containing the extramembraneous catalytic core and F(0) containing the membrane proton channel, linked together by a central stalk and a peripheral stalk. During catalysis, ATP synthesis in the catalytic domain of F(1) is coupled via a rotary mechanism of the central stalk subunits to proton translocation. Its function is as follows. Key component of the F(0) channel; it plays a direct role in translocation across the membrane. A homomeric c-ring of between 10-14 subunits forms the central stalk rotor element with the F(1) delta and epsilon subunits. In Sulfurimonas denitrificans (strain ATCC 33889 / DSM 1251) (Thiomicrospira denitrificans (strain ATCC 33889 / DSM 1251)), this protein is ATP synthase subunit c.